The chain runs to 397 residues: Argininosuccinate synthase (397 aa).

Residue 9–17 coordinates ATP; sequence AYSGGLDTS. Tyr-87 serves as a coordination point for L-citrulline. Residue Gly-117 participates in ATP binding. Positions 119, 123, and 124 each coordinate L-aspartate. Residue Asn-123 coordinates L-citrulline. Positions 127, 175, 184, 257, and 269 each coordinate L-citrulline.

The protein belongs to the argininosuccinate synthase family. Type 1 subfamily. Homotetramer.

The protein resides in the cytoplasm. It carries out the reaction L-citrulline + L-aspartate + ATP = 2-(N(omega)-L-arginino)succinate + AMP + diphosphate + H(+). It participates in amino-acid biosynthesis; L-arginine biosynthesis; L-arginine from L-ornithine and carbamoyl phosphate: step 2/3. The protein is Argininosuccinate synthase of Dictyoglomus thermophilum (strain ATCC 35947 / DSM 3960 / H-6-12).